Consider the following 194-residue polypeptide: A-type ATP synthase subunit E (194 aa).

The protein belongs to the V-ATPase E subunit family. Has multiple subunits with at least A(3), B(3), C, D, E, F, H, I and proteolipid K(x).

It is found in the cell membrane. Component of the A-type ATP synthase that produces ATP from ADP in the presence of a proton gradient across the membrane. This is A-type ATP synthase subunit E from Saccharolobus islandicus (strain Y.N.15.51 / Yellowstone #2) (Sulfolobus islandicus).